Here is a 114-residue protein sequence, read N- to C-terminus: MTTIGPIENEIKELLTKELNPINLEIINESYMHNVPKGSESHFKVKIVSEKFETLSMIEQHRLVNEILKNFIGNGKIHALSITSRTPTQWKKNNQTKINVDDDKSPSCKGGFGK.

Positions 88-98 are enriched in polar residues; sequence TQWKKNNQTKI. The disordered stretch occupies residues 88 to 114; it reads TQWKKNNQTKINVDDDKSPSCKGGFGK.

Belongs to the BolA/IbaG family.

The protein is BolA-like protein DDB_G0274169 of Dictyostelium discoideum (Social amoeba).